The sequence spans 119 residues: NADH-quinone oxidoreductase subunit A (119 aa).

The next 3 helical transmembrane spans lie at 9–29, 63–83, and 88–108; these read VLLF…LGYV, LVAI…PWAV, and VGMA…VGFA.

Belongs to the complex I subunit 3 family. NDH-1 is composed of 14 different subunits. Subunits NuoA, H, J, K, L, M, N constitute the membrane sector of the complex.

The protein localises to the cell inner membrane. It catalyses the reaction a quinone + NADH + 5 H(+)(in) = a quinol + NAD(+) + 4 H(+)(out). Functionally, NDH-1 shuttles electrons from NADH, via FMN and iron-sulfur (Fe-S) centers, to quinones in the respiratory chain. The immediate electron acceptor for the enzyme in this species is believed to be ubiquinone. Couples the redox reaction to proton translocation (for every two electrons transferred, four hydrogen ions are translocated across the cytoplasmic membrane), and thus conserves the redox energy in a proton gradient. The chain is NADH-quinone oxidoreductase subunit A from Verminephrobacter eiseniae (strain EF01-2).